The sequence spans 363 residues: RNA polymerase II holoenzyme cyclin-like subunit (363 aa).

A Cyclin N-terminal domain is found at 53-143; that stretch reads YQMLRLAKNL…IGECEFWLIS (91 aa). Positions 252-312 are disordered; it reads TPGGSGSPAM…SPQKEKSKLQ (61 aa). Residues 265-276 are compositionally biased toward polar residues; sequence IQQNPPNQAYQL. A compositionally biased stretch (low complexity) spans 277-298; sequence TPQQQEMFRQQQMQQQNRQPET. Residues 299–310 show a composition bias toward basic and acidic residues; that stretch reads QAKDSPQKEKSK.

Belongs to the cyclin family. Cyclin C subfamily. In terms of assembly, component of the SRB8-11 complex, a regulatory module of the Mediator complex.

Its subcellular location is the nucleus. Component of the SRB8-11 complex. The SRB8-11 complex is a regulatory module of the Mediator complex which is itself involved in regulation of basal and activated RNA polymerase II-dependent transcription. The SRB8-11 complex may be involved in the transcriptional repression of a subset of genes regulated by Mediator. It may inhibit the association of the Mediator complex with RNA polymerase II to form the holoenzyme complex. The SRB8-11 complex phosphorylates the C-terminal domain (CTD) of the largest subunit of RNA polymerase II. This is RNA polymerase II holoenzyme cyclin-like subunit (SSN8) from Pyricularia oryzae (strain 70-15 / ATCC MYA-4617 / FGSC 8958) (Rice blast fungus).